Here is a 115-residue protein sequence, read N- to C-terminus: U3-lycotoxin-Ls1a (115 aa).

Positions 1 to 20 are cleaved as a signal peptide; the sequence is MKFVLLFGVFLVTLFSYSSA. Residues 21–44 constitute a propeptide that is removed on maturation; it reads EMLDDFDQADEDELLSLIEKEEAR. 4 disulfide bridges follow: cysteine 48–cysteine 63, cysteine 55–cysteine 72, cysteine 62–cysteine 87, and cysteine 74–cysteine 85.

Belongs to the neurotoxin 19 (CSTX) family. 01 subfamily. Expressed by the venom gland.

The protein localises to the secreted. The protein is U3-lycotoxin-Ls1a of Lycosa singoriensis (Wolf spider).